Here is a 399-residue protein sequence, read N- to C-terminus: MTVGDTTSGSGEEPAADSSVHATPHHEVDHTVEPTDDPLAIRLEALILGADRRYTPFQAARTAGVSMDLASRFWRAMAFADIGQAKALTEADVLALRRLAGLVEAGLLSEPMAIQVARSTGQTTARLAEWQIDSFLEGLTEPPEPGMTRTEVTYPLVELLLPELQEFLVYVWRRQLAAATGRVVQAADDEEMVDRRPRVRFADLVGFTRLTRRLEEEELGELVESFETTAADLVAPTAAGLVKTLGDEVLFAADDAGTAAEIALRLIEAMSQDETMPALRVGIAFGTVTTRMGDVFGTTVNLASRLTSIAPKDAVLVDGAFAKELVRHGEAPESEAQAAEAVAAAAERVRLAEKEGREPDDEPPLPTYRFGLQPMWQRPVRGLGVVEPWLLARRGKTGS.

A compositionally biased stretch (polar residues) spans 1-10; the sequence is MTVGDTTSGS. Residues 1–35 are disordered; it reads MTVGDTTSGSGEEPAADSSVHATPHHEVDHTVEPT. Basic and acidic residues predominate over residues 24–33; sequence PHHEVDHTVE. The 110-residue stretch at 198-307 folds into the Guanylate cyclase domain; it reads RVRFADLVGF…TTVNLASRLT (110 aa). Residues Asp203 and Asp247 each contribute to the Mg(2+) site.

The protein belongs to the adenylyl cyclase class-3 family. Mg(2+) serves as cofactor.

It carries out the reaction ATP = 3',5'-cyclic AMP + diphosphate. This chain is Adenylate cyclase (cya), found in Streptomyces griseus.